A 308-amino-acid polypeptide reads, in one-letter code: Homoserine kinase (308 aa).

An ATP-binding site is contributed by 94-104 (PLARGLGSSAT).

Belongs to the GHMP kinase family. Homoserine kinase subfamily.

It is found in the cytoplasm. The enzyme catalyses L-homoserine + ATP = O-phospho-L-homoserine + ADP + H(+). It functions in the pathway amino-acid biosynthesis; L-threonine biosynthesis; L-threonine from L-aspartate: step 4/5. Functionally, catalyzes the ATP-dependent phosphorylation of L-homoserine to L-homoserine phosphate. The protein is Homoserine kinase of Crocosphaera subtropica (strain ATCC 51142 / BH68) (Cyanothece sp. (strain ATCC 51142)).